The chain runs to 323 residues: DNA-directed RNA polymerase subunit alpha (323 aa).

Positions 1–225 are alpha N-terminal domain (alpha-NTD); sequence MLDIAMPKIE…QYSQTIADFN (225 aa). The tract at residues 243 to 323 is alpha C-terminal domain (alpha-CTD); it reads PADIYDTPIE…TNSSPAGIES (81 aa).

It belongs to the RNA polymerase alpha chain family. As to quaternary structure, homodimer. The RNAP catalytic core consists of 2 alpha, 1 beta, 1 beta' and 1 omega subunit. When a sigma factor is associated with the core the holoenzyme is formed, which can initiate transcription.

It carries out the reaction RNA(n) + a ribonucleoside 5'-triphosphate = RNA(n+1) + diphosphate. In terms of biological role, DNA-dependent RNA polymerase catalyzes the transcription of DNA into RNA using the four ribonucleoside triphosphates as substrates. This chain is DNA-directed RNA polymerase subunit alpha, found in Roseiflexus castenholzii (strain DSM 13941 / HLO8).